Here is a 362-residue protein sequence, read N- to C-terminus: Flagellar P-ring protein (362 aa).

The signal sequence occupies residues 1–15 (MLAAALMSAAFGAHA).

Belongs to the FlgI family. The basal body constitutes a major portion of the flagellar organelle and consists of four rings (L,P,S, and M) mounted on a central rod.

The protein localises to the periplasm. It localises to the bacterial flagellum basal body. In terms of biological role, assembles around the rod to form the L-ring and probably protects the motor/basal body from shearing forces during rotation. In Pseudomonas fluorescens (strain Pf0-1), this protein is Flagellar P-ring protein.